Consider the following 464-residue polypeptide: Protein phosphatase 2C homolog 2 (464 aa).

One can recognise a PPM-type phosphatase domain in the interval 23–292 (AFGLCAMQGW…DNMSIVVVAL (270 aa)). Positions 62, 63, 234, and 283 each coordinate Mn(2+). The segment at 174 to 355 (DGFVEMDRVN…KPQDKFTRDH (182 aa)) is interaction with IRE1. Disordered regions lie at residues 361–398 (SVTAADNDDPMDIDDTDADTDAENLDPSSQSKSKTSGP) and 434–464 (QLLQTMGHDPASSHPENDSNTDHKAGRSHLQ). Over residues 366–384 (DNDDPMDIDDTDADTDAEN) the composition is skewed to acidic residues. Phosphothreonine occurs at positions 376 and 380. The span at 386 to 396 (DPSSQSKSKTS) shows a compositional bias: polar residues. A compositionally biased stretch (basic and acidic residues) spans 448-458 (PENDSNTDHKA).

Belongs to the PP2C family. In terms of assembly, interacts with IRE1 (when phosphorylated); the interaction is direct and serves to attenuate the endoplasmic reticulum unfolded protein response. Interacts (when phosphorylated) with RAD53 (via domain FHA 1); the interaction is direct and serves to regulate DNA damage checkpoint signaling. Interacts with the ATG17-ATG29-ATG31 and ATG1-ATG13 supercomplex; to regulate induction of autophagy. It depends on Mg(2+) as a cofactor. The cofactor is Mn(2+).

It is found in the nucleus. The protein localises to the cytoplasm. The protein resides in the cytosol. The enzyme catalyses O-phospho-L-seryl-[protein] + H2O = L-seryl-[protein] + phosphate. It carries out the reaction O-phospho-L-threonyl-[protein] + H2O = L-threonyl-[protein] + phosphate. Dephosphorylating regulator for many key proteins. Dephosphorylates the cell cycle master regulator CDC28/cyclin-dependent kinase 1; its activity appears redundant with phosphatase PTC3. Dephosphorylates HOG1 at 'Thr-171', to attenuate activation of the stress-activated p38MAPK cascade; its activity appears redundant with phosphatase PTC3. Positively regulates both nonselective macroautophagy as well as the selective cytoplasm-to-vacuole (cvt) autophagy pathway and the genotoxin-induced targeted autophagy (GTA) pathway, possibly by dephosphorylating ATG13 to enable the interaction between the ATG17-ATG29-ATG31 and ATG1-ATG13 complexes; its activity appears redundant with phosphatase PTC3. Dephosphorylates RAD53, to regulate DNA damage checkpoint signaling. Dephosphorylates IRE1, to negatively regulate the endoplasmic reticulum unfolded protein response. This is Protein phosphatase 2C homolog 2 (PTC2) from Saccharomyces cerevisiae (strain ATCC 204508 / S288c) (Baker's yeast).